The primary structure comprises 142 residues: Small ribosomal subunit protein uS12 (142 aa).

A disordered region spans residues 1–22 (MPTFNQLVRKGRKAAKKKSTAP). The span at 9–19 (RKGRKAAKKKS) shows a compositional bias: basic residues. 3-methylthioaspartic acid is present on Asp102.

This sequence belongs to the universal ribosomal protein uS12 family. In terms of assembly, part of the 30S ribosomal subunit. Contacts proteins S8 and S17. May interact with IF1 in the 30S initiation complex.

Functionally, with S4 and S5 plays an important role in translational accuracy. In terms of biological role, interacts with and stabilizes bases of the 16S rRNA that are involved in tRNA selection in the A site and with the mRNA backbone. Located at the interface of the 30S and 50S subunits, it traverses the body of the 30S subunit contacting proteins on the other side and probably holding the rRNA structure together. The combined cluster of proteins S8, S12 and S17 appears to hold together the shoulder and platform of the 30S subunit. The protein is Small ribosomal subunit protein uS12 of Acetivibrio thermocellus (strain ATCC 27405 / DSM 1237 / JCM 9322 / NBRC 103400 / NCIMB 10682 / NRRL B-4536 / VPI 7372) (Clostridium thermocellum).